The primary structure comprises 459 residues: Bifunctional protein GlmU (459 aa).

Residues 1-229 (MSNFAIILAA…FDESLGVNDR (229 aa)) form a pyrophosphorylase region. UDP-N-acetyl-alpha-D-glucosamine contacts are provided by residues 8-11 (LAAG), Lys-22, Gln-72, and 77-78 (GT). Mg(2+) is bound at residue Asp-102. Gly-139, Glu-154, Asn-169, and Asn-227 together coordinate UDP-N-acetyl-alpha-D-glucosamine. Asn-227 is a Mg(2+) binding site. Positions 230–250 (VALATAESVMRRRINHKHMVN) are linker. The N-acetyltransferase stretch occupies residues 251-459 (GVSFVNPEAT…TRLPHHPKNQ (209 aa)). UDP-N-acetyl-alpha-D-glucosamine is bound by residues Arg-332 and Lys-350. His-362 serves as the catalytic Proton acceptor. Residues Tyr-365 and Asn-376 each contribute to the UDP-N-acetyl-alpha-D-glucosamine site. Acetyl-CoA contacts are provided by residues Ala-379, 385–386 (NY), Ser-404, Ala-422, and Arg-439.

It in the N-terminal section; belongs to the N-acetylglucosamine-1-phosphate uridyltransferase family. The protein in the C-terminal section; belongs to the transferase hexapeptide repeat family. Homotrimer. It depends on Mg(2+) as a cofactor.

It is found in the cytoplasm. The enzyme catalyses alpha-D-glucosamine 1-phosphate + acetyl-CoA = N-acetyl-alpha-D-glucosamine 1-phosphate + CoA + H(+). It carries out the reaction N-acetyl-alpha-D-glucosamine 1-phosphate + UTP + H(+) = UDP-N-acetyl-alpha-D-glucosamine + diphosphate. The protein operates within nucleotide-sugar biosynthesis; UDP-N-acetyl-alpha-D-glucosamine biosynthesis; N-acetyl-alpha-D-glucosamine 1-phosphate from alpha-D-glucosamine 6-phosphate (route II): step 2/2. It participates in nucleotide-sugar biosynthesis; UDP-N-acetyl-alpha-D-glucosamine biosynthesis; UDP-N-acetyl-alpha-D-glucosamine from N-acetyl-alpha-D-glucosamine 1-phosphate: step 1/1. It functions in the pathway bacterial outer membrane biogenesis; LPS lipid A biosynthesis. Its function is as follows. Catalyzes the last two sequential reactions in the de novo biosynthetic pathway for UDP-N-acetylglucosamine (UDP-GlcNAc). The C-terminal domain catalyzes the transfer of acetyl group from acetyl coenzyme A to glucosamine-1-phosphate (GlcN-1-P) to produce N-acetylglucosamine-1-phosphate (GlcNAc-1-P), which is converted into UDP-GlcNAc by the transfer of uridine 5-monophosphate (from uridine 5-triphosphate), a reaction catalyzed by the N-terminal domain. The protein is Bifunctional protein GlmU of Streptococcus pneumoniae (strain JJA).